The following is a 461-amino-acid chain: Cysteine--tRNA ligase (461 aa).

Residue Cys28 coordinates Zn(2+). The short motif at 30–40 (VTIYDLCHIGH) is the 'HIGH' region element. Positions 209, 234, and 238 each coordinate Zn(2+). The short motif at 266–270 (KMSKS) is the 'KMSKS' region element. Lys269 is an ATP binding site.

It belongs to the class-I aminoacyl-tRNA synthetase family. As to quaternary structure, monomer. Requires Zn(2+) as cofactor.

The protein localises to the cytoplasm. It carries out the reaction tRNA(Cys) + L-cysteine + ATP = L-cysteinyl-tRNA(Cys) + AMP + diphosphate. This chain is Cysteine--tRNA ligase, found in Edwardsiella ictaluri (strain 93-146).